Reading from the N-terminus, the 418-residue chain is D-amino acid dehydrogenase (418 aa).

3-17 (VLVLGAGVAGVSSAW) contacts FAD.

This sequence belongs to the DadA oxidoreductase family. Requires FAD as cofactor.

It catalyses the reaction a D-alpha-amino acid + A + H2O = a 2-oxocarboxylate + AH2 + NH4(+). Its pathway is amino-acid degradation; D-alanine degradation; NH(3) and pyruvate from D-alanine: step 1/1. Oxidative deamination of D-amino acids. This Neisseria meningitidis serogroup C / serotype 2a (strain ATCC 700532 / DSM 15464 / FAM18) protein is D-amino acid dehydrogenase.